We begin with the raw amino-acid sequence, 374 residues long: Glutamate 5-kinase (374 aa).

Position 9 (lysine 9) interacts with ATP. Substrate contacts are provided by serine 49, aspartate 136, and asparagine 148. ATP is bound by residues 168 to 169 and 210 to 216; these read TD and TGGMRSK. One can recognise a PUA domain in the interval 276–354; that stretch reads AGMITVDSGA…EEARQYSYLH (79 aa).

This sequence belongs to the glutamate 5-kinase family.

The protein localises to the cytoplasm. The catalysed reaction is L-glutamate + ATP = L-glutamyl 5-phosphate + ADP. Its pathway is amino-acid biosynthesis; L-proline biosynthesis; L-glutamate 5-semialdehyde from L-glutamate: step 1/2. In terms of biological role, catalyzes the transfer of a phosphate group to glutamate to form L-glutamate 5-phosphate. This is Glutamate 5-kinase from Geobacillus kaustophilus (strain HTA426).